We begin with the raw amino-acid sequence, 160 residues long: Cytochrome b6-f complex subunit 4 (160 aa).

The next 3 membrane-spanning stretches (helical) occupy residues 36–56 (LLYI…GLAV), 95–115 (LLGV…PFLE), and 131–151 (TVFL…TLPI).

This sequence belongs to the cytochrome b family. PetD subfamily. As to quaternary structure, the 4 large subunits of the cytochrome b6-f complex are cytochrome b6, subunit IV (17 kDa polypeptide, petD), cytochrome f and the Rieske protein, while the 4 small subunits are petG, petL, petM and petN. The complex functions as a dimer.

Its subcellular location is the plastid. It localises to the chloroplast thylakoid membrane. Component of the cytochrome b6-f complex, which mediates electron transfer between photosystem II (PSII) and photosystem I (PSI), cyclic electron flow around PSI, and state transitions. This chain is Cytochrome b6-f complex subunit 4, found in Morus indica (Mulberry).